The chain runs to 145 residues: Secreted RxLR effector protein 43 (145 aa).

A signal peptide spans 1-20 (MKVTMALAALCVALQAPCIG). Residues 31 to 34 (RHLR) carry the RxLR motif.

This sequence belongs to the RxLR effector family.

It localises to the secreted. It is found in the host nucleus. The protein resides in the host cytoplasm. Functionally, secreted effector that completely suppresses the host cell death induced by cell death-inducing proteins. The protein is Secreted RxLR effector protein 43 of Plasmopara viticola (Downy mildew of grapevine).